We begin with the raw amino-acid sequence, 571 residues long: Proline--tRNA ligase (571 aa).

It belongs to the class-II aminoacyl-tRNA synthetase family. ProS type 1 subfamily. As to quaternary structure, homodimer.

It is found in the cytoplasm. The catalysed reaction is tRNA(Pro) + L-proline + ATP = L-prolyl-tRNA(Pro) + AMP + diphosphate. Its function is as follows. Catalyzes the attachment of proline to tRNA(Pro) in a two-step reaction: proline is first activated by ATP to form Pro-AMP and then transferred to the acceptor end of tRNA(Pro). As ProRS can inadvertently accommodate and process non-cognate amino acids such as alanine and cysteine, to avoid such errors it has two additional distinct editing activities against alanine. One activity is designated as 'pretransfer' editing and involves the tRNA(Pro)-independent hydrolysis of activated Ala-AMP. The other activity is designated 'posttransfer' editing and involves deacylation of mischarged Ala-tRNA(Pro). The misacylated Cys-tRNA(Pro) is not edited by ProRS. This is Proline--tRNA ligase from Actinobacillus succinogenes (strain ATCC 55618 / DSM 22257 / CCUG 43843 / 130Z).